The chain runs to 479 residues: Glutathione gamma-glutamylcysteinyltransferase 3 (479 aa).

A Peptidase C83 domain is found at 1-221; it reads MASAGLYRRV…GYMIISKLKR (221 aa). Residues Cys56, His162, and Asp180 contribute to the active site.

This sequence belongs to the phytochelatin synthase family. As to expression, expressed in roots, nodules and leaves.

It catalyses the reaction [Glu(-Cys)](n)-Gly + glutathione + H(+) = [Glu(-Cys)](n+1)-Gly + glycine. Requires cadmium for activity. Functionally, involved in the synthesis of phytochelatins (PC) and homophytochelatins (hPC), the heavy-metal-binding peptides of plants. This chain is Glutathione gamma-glutamylcysteinyltransferase 3 (PCS3), found in Lotus japonicus (Lotus corniculatus var. japonicus).